Consider the following 502-residue polypeptide: Cytochrome P450 3A40 (502 aa).

Heme is bound at residue Cys443.

The protein belongs to the cytochrome P450 family. Requires heme as cofactor.

It localises to the endoplasmic reticulum membrane. It is found in the microsome membrane. The enzyme catalyses an organic molecule + reduced [NADPH--hemoprotein reductase] + O2 = an alcohol + oxidized [NADPH--hemoprotein reductase] + H2O + H(+). The sequence is that of Cytochrome P450 3A40 (cyp3a40) from Oryzias latipes (Japanese rice fish).